The primary structure comprises 290 residues: Pyridoxal 5'-phosphate synthase subunit PdxS (290 aa).

D22 lines the D-ribose 5-phosphate pocket. The Schiff-base intermediate with D-ribose 5-phosphate role is filled by K79. Residue G151 participates in D-ribose 5-phosphate binding. A D-glyceraldehyde 3-phosphate-binding site is contributed by R163. D-ribose 5-phosphate-binding positions include G212 and 233–234 (GS).

Belongs to the PdxS/SNZ family. In the presence of PdxT, forms a dodecamer of heterodimers.

It catalyses the reaction aldehydo-D-ribose 5-phosphate + D-glyceraldehyde 3-phosphate + L-glutamine = pyridoxal 5'-phosphate + L-glutamate + phosphate + 3 H2O + H(+). It participates in cofactor biosynthesis; pyridoxal 5'-phosphate biosynthesis. Catalyzes the formation of pyridoxal 5'-phosphate from ribose 5-phosphate (RBP), glyceraldehyde 3-phosphate (G3P) and ammonia. The ammonia is provided by the PdxT subunit. Can also use ribulose 5-phosphate and dihydroxyacetone phosphate as substrates, resulting from enzyme-catalyzed isomerization of RBP and G3P, respectively. The polypeptide is Pyridoxal 5'-phosphate synthase subunit PdxS (Clostridium botulinum (strain Loch Maree / Type A3)).